Consider the following 94-residue polypeptide: UPF0235 protein TON_0641 (94 aa).

Belongs to the UPF0235 family.

The sequence is that of UPF0235 protein TON_0641 from Thermococcus onnurineus (strain NA1).